The following is a 223-amino-acid chain: Urease accessory protein UreF (223 aa).

It belongs to the UreF family. In terms of assembly, ureD, UreF and UreG form a complex that acts as a GTP-hydrolysis-dependent molecular chaperone, activating the urease apoprotein by helping to assemble the nickel containing metallocenter of UreC. The UreE protein probably delivers the nickel.

The protein localises to the cytoplasm. Functionally, required for maturation of urease via the functional incorporation of the urease nickel metallocenter. This is Urease accessory protein UreF from Rhizobium leguminosarum bv. trifolii (strain WSM2304).